Reading from the N-terminus, the 404-residue chain is Mevalonate kinase (404 aa).

Residues Lys-12, Ser-130, and Gly-135–Ser-141 each bind ATP. 2 residues coordinate Mg(2+): Ser-141 and Glu-184. Catalysis depends on Asp-195, which acts as the Proton acceptor.

It belongs to the GHMP kinase family. Mevalonate kinase subfamily. In terms of assembly, homodimer. The cofactor is Mg(2+).

The protein localises to the cytoplasm. The protein resides in the nucleus. It catalyses the reaction (R)-mevalonate + ATP = (R)-5-phosphomevalonate + ADP + H(+). It functions in the pathway isoprenoid biosynthesis; isopentenyl diphosphate biosynthesis via mevalonate pathway; isopentenyl diphosphate from (R)-mevalonate: step 1/3. Its activity is regulated as follows. Farnesyl pyrophosphate and geranyl pyrophosphate inhibit mevalonate kinase by binding competitively at the ATP-binding site. Mevalonate kinase; part of the second module of ergosterol biosynthesis pathway that includes the middle steps of the pathway. Erg12 converts mevalonate into 5-phosphomevalonate. The second module is carried out in the vacuole and involves the formation of farnesyl diphosphate, which is also an important intermediate in the biosynthesis of ubiquinone, dolichol, heme and prenylated proteins. Activity by the mevalonate kinase erg12 first converts mevalonate into 5-phosphomevalonate. 5-phosphomevalonate is then further converted to 5-diphosphomevalonate by the phosphomevalonate kinase erg8. The diphosphomevalonate decarboxylase mvd1 then produces isopentenyl diphosphate. The isopentenyl-diphosphate delta-isomerase idi1 then catalyzes the 1,3-allylic rearrangement of the homoallylic substrate isopentenyl (IPP) to its highly electrophilic allylic isomer, dimethylallyl diphosphate (DMAPP). Finally the farnesyl diphosphate synthase fps1 catalyzes the sequential condensation of isopentenyl pyrophosphate with dimethylallyl pyrophosphate, and then with the resultant geranylpyrophosphate to the ultimate product farnesyl pyrophosphate. The polypeptide is Mevalonate kinase (erg12) (Schizosaccharomyces pombe (strain 972 / ATCC 24843) (Fission yeast)).